The primary structure comprises 247 residues: Terpene cyclase adrI (247 aa).

Transmembrane regions (helical) follow at residues 20-40, 51-71, 76-96, 112-132, and 141-161; these read VAEFLRILAGICWTLNYFSML, TGIFPLCNDIGWEFIYAFIYP, HWEGGVRVWFLVHCIVIFFII, NLYFLYGIVTIGFAIGQYSFA, and FFYGGVLCQTLASLGPIAQIL. Asn164 carries N-linked (GlcNAc...) asparagine glycosylation. 2 helical membrane passes run 179–199 and 205–225; these read FGGFIKLTIYYLTGNAAGPWF and KFYIGLTLILDFTYPICYYVI.

Belongs to the paxB family.

Its subcellular location is the membrane. It functions in the pathway secondary metabolite biosynthesis; terpenoid biosynthesis. Functionally, terpene cyclase; part of the gene cluster that mediates the biosynthesis of andrastins, meroterpenoid compounds that exhibit inhibitory activity against ras farnesyltransferase, suggesting that they could be promising leads for antitumor agents. The first step of the pathway is the synthesis of 3,5-dimethylorsellinic acid (DMOA) by the polyketide synthase adrD via condensation of one acetyl-CoA starter unit with 3 malonyl-CoA units and 2 methylations. DMAO is then converted to farnesyl-DMAO by the prenyltransferase adrG. The methyltransferase adrK catalyzes the methylation of the carboxyl group of farnesyl-DMAO to farnesyl-DMAO methyl ester which is further converted to epoxyfarnesyl-DMAO methyl ester by the FAD-dependent monooxygenase adrH. The terpene cyclase adrI then catalyzes the carbon skeletal rearrangement to generate the andrastin E, the first compound in the pathway having the andrastin scaffold, with the tetracyclic ring system. The post-cyclization tailoring enzymes adrF, adrE, adrJ, and adrA, are involved in the conversion of andrastin E into andrastin A. The short chain dehydrogenase adrF is responsible for the oxidation of the C-3 a hydroxyl group of andrastin E to yield the corresponding ketone, andrastin D. The ketoreductase adrE stereoselectively reduces the carbonyl moiety to reverse the stereochemistry of the C-3 position to yield andrastin F. The acetyltransferase adrJ is the acetyltransferase that attaches the acetyl group to the C-3 hydroxyl group of andrastin F to yield andrastin C. Finally, the cytochrome P450 monooxygenase adrA catalyzes two sequential oxidation reactions of the C-23 methyl group, to generate the corresponding alcohol andrastin B, and aldehyde andrastin A. In Penicillium rubens (strain ATCC 28089 / DSM 1075 / NRRL 1951 / Wisconsin 54-1255) (Penicillium chrysogenum), this protein is Terpene cyclase adrI.